We begin with the raw amino-acid sequence, 443 residues long: Trigger factor (443 aa).

The PPIase FKBP-type domain maps to 165–250 (GDQVVMDFVG…IKEVKEPVAA (86 aa)).

It belongs to the FKBP-type PPIase family. Tig subfamily.

The protein localises to the cytoplasm. The catalysed reaction is [protein]-peptidylproline (omega=180) = [protein]-peptidylproline (omega=0). Functionally, involved in protein export. Acts as a chaperone by maintaining the newly synthesized protein in an open conformation. Functions as a peptidyl-prolyl cis-trans isomerase. The polypeptide is Trigger factor (Ruegeria pomeroyi (strain ATCC 700808 / DSM 15171 / DSS-3) (Silicibacter pomeroyi)).